We begin with the raw amino-acid sequence, 540 residues long: Synaptotagmin-3 (540 aa).

Residues 9-29 form a helical membrane-spanning segment; sequence GIIGFVIGIPIGLILGFFVLI. Residues 67–249 form the SMP-LTD domain; sequence DYERVDWFNK…WPQVLEIPIL (183 aa). The interval 227–509 is phospholipid binding; that stretch reads QETIKRQVSS…ELGHVDINLD (283 aa). C2 domains follow at residues 240-363 and 401-521; these read WPQV…EFNL and RKES…NQKY. 5 residues coordinate Ca(2+): Asp-277, Asp-283, Asp-333, Asp-335, and Asp-341.

The protein belongs to the synaptotagmin family. It depends on Ca(2+) as a cofactor.

The protein resides in the membrane. May be involved in membrane trafficking. This is Synaptotagmin-3 (SYT3) from Arabidopsis thaliana (Mouse-ear cress).